The sequence spans 421 residues: Gamma-glutamyl phosphate reductase (421 aa).

Belongs to the gamma-glutamyl phosphate reductase family.

The protein resides in the cytoplasm. The enzyme catalyses L-glutamate 5-semialdehyde + phosphate + NADP(+) = L-glutamyl 5-phosphate + NADPH + H(+). Its pathway is amino-acid biosynthesis; L-proline biosynthesis; L-glutamate 5-semialdehyde from L-glutamate: step 2/2. Its function is as follows. Catalyzes the NADPH-dependent reduction of L-glutamate 5-phosphate into L-glutamate 5-semialdehyde and phosphate. The product spontaneously undergoes cyclization to form 1-pyrroline-5-carboxylate. This chain is Gamma-glutamyl phosphate reductase, found in Pseudomonas fluorescens (strain SBW25).